The chain runs to 258 residues: Phosphate import ATP-binding protein PstB (258 aa).

Positions 5–247 (IDVSGLNAYY…ERIFSNPSVQ (243 aa)) constitute an ABC transporter domain. 37–44 (GPSGCGKS) is an ATP binding site.

Belongs to the ABC transporter superfamily. Phosphate importer (TC 3.A.1.7) family. As to quaternary structure, the complex is composed of two ATP-binding proteins (PstB), two transmembrane proteins (PstC and PstA) and a solute-binding protein (PstS).

It localises to the cell membrane. It carries out the reaction phosphate(out) + ATP + H2O = ADP + 2 phosphate(in) + H(+). Part of the ABC transporter complex PstSACB involved in phosphate import. Responsible for energy coupling to the transport system. The protein is Phosphate import ATP-binding protein PstB of Streptomyces coelicolor (strain ATCC BAA-471 / A3(2) / M145).